The primary structure comprises 299 residues: MSASEDVWRKDLKMIHGYPMIYAFALNWERIEEFQSTPGDIVITTYPKSGTTWLSEIVDMVLNDGNVEKCKRDVITSKVPMLELSVPGIRISGVELLKKTPSPRIIKTHLPIDLLPKSFWENKCKMIYLARNGKDVAVSYYHFDLMNSINPLPGTWEEYLEKFLAGNVAYGSWFDHVKSWWEKREEHPLLYLYYEELKQNPKKEIKKIASFLDKTLDEEALDRIVHHTSFEMMKENPLVNYTHLPTAMMDHSKSPFMRKGIVGDWKNYFTMTQTEQFDAVYKKKMSGTTLEFCTDIQSA.

48–53 contacts 3'-phosphoadenylyl sulfate; that stretch reads KSGTTW. Residue 107-109 participates in substrate binding; sequence KTH. His109 (proton acceptor) is an active-site residue. 3'-phosphoadenylyl sulfate is bound by residues Arg131, Ser139, Tyr194, 228–233, and 258–260; these read TSFEMM and RKG.

Belongs to the sulfotransferase 1 family. Liver specific.

The protein resides in the cytoplasm. It carries out the reaction a phenol + 3'-phosphoadenylyl sulfate = an aryl sulfate + adenosine 3',5'-bisphosphate + H(+). The catalysed reaction is 3,3',5-triiodo-L-thyronine + 3'-phosphoadenylyl sulfate = 3,3',5-triiodo-L-thyronine sulfate + adenosine 3',5'-bisphosphate + H(+). It catalyses the reaction 3,3',5'-triiodo-L-thyronine + 3'-phosphoadenylyl sulfate = 3,3',5'-triiodo-L-thyronine sulfate + adenosine 3',5'-bisphosphate + H(+). The enzyme catalyses 3,3'-diiodo-L-thyronine + 3'-phosphoadenylyl sulfate = 3,3'-diiodo-L-thyronine sulfate + adenosine 3',5'-bisphosphate + H(+). It carries out the reaction dopamine + 3'-phosphoadenylyl sulfate = dopamine 3-O-sulfate + adenosine 3',5'-bisphosphate + H(+). The catalysed reaction is dopamine + 3'-phosphoadenylyl sulfate = dopamine 4-O-sulfate + adenosine 3',5'-bisphosphate + H(+). It catalyses the reaction 4-ethylphenol + 3'-phosphoadenylyl sulfate = 4-ethylphenyl sulfate + adenosine 3',5'-bisphosphate + H(+). Functionally, sulfotransferase that utilizes 3'-phospho-5'-adenylyl sulfate (PAPS) as sulfonate donor to catalyze the sulfate conjugation of dopamine, small phenols such as 1-naphthol and p-nitrophenol and thyroid hormones, including 3,3'-diiodothyronine, triidothyronine (T3) and reverse triiodothyronine (rT3). May play a role in gut microbiota-host metabolic interaction. O-sulfonates 4-ethylphenol (4-EP), a dietary tyrosine-derived metabolite produced by gut bacteria. The product 4-EPS crosses the blood-brain barrier and may negatively regulate oligodendrocyte maturation and myelination, affecting the functional connectivity of different brain regions associated with the limbic system. In Mus musculus (Mouse), this protein is Sulfotransferase 1B1.